A 178-amino-acid polypeptide reads, in one-letter code: ATP synthase subunit delta (178 aa).

This sequence belongs to the ATPase delta chain family. As to quaternary structure, F-type ATPases have 2 components, F(1) - the catalytic core - and F(0) - the membrane proton channel. F(1) has five subunits: alpha(3), beta(3), gamma(1), delta(1), epsilon(1). F(0) has three main subunits: a(1), b(2) and c(10-14). The alpha and beta chains form an alternating ring which encloses part of the gamma chain. F(1) is attached to F(0) by a central stalk formed by the gamma and epsilon chains, while a peripheral stalk is formed by the delta and b chains.

Its subcellular location is the cell inner membrane. In terms of biological role, f(1)F(0) ATP synthase produces ATP from ADP in the presence of a proton or sodium gradient. F-type ATPases consist of two structural domains, F(1) containing the extramembraneous catalytic core and F(0) containing the membrane proton channel, linked together by a central stalk and a peripheral stalk. During catalysis, ATP synthesis in the catalytic domain of F(1) is coupled via a rotary mechanism of the central stalk subunits to proton translocation. Functionally, this protein is part of the stalk that links CF(0) to CF(1). It either transmits conformational changes from CF(0) to CF(1) or is implicated in proton conduction. This is ATP synthase subunit delta from Methylococcus capsulatus (strain ATCC 33009 / NCIMB 11132 / Bath).